Reading from the N-terminus, the 267-residue chain is Undecaprenyl-diphosphatase (267 aa).

8 helical membrane passes run 1-21 (MSYF…FLPI), 39-59 (QGLA…VIYF), 83-103 (AKLA…GLLM), 111-131 (LRSA…LWWV), 144-164 (TGWK…IPGT), 189-209 (FLMS…KLVT), 218-238 (FLLT…HFFL), and 246-266 (MTPF…FLLM).

It belongs to the UppP family.

It is found in the cell inner membrane. The enzyme catalyses di-trans,octa-cis-undecaprenyl diphosphate + H2O = di-trans,octa-cis-undecaprenyl phosphate + phosphate + H(+). Functionally, catalyzes the dephosphorylation of undecaprenyl diphosphate (UPP). Confers resistance to bacitracin. In Vibrio campbellii (strain ATCC BAA-1116), this protein is Undecaprenyl-diphosphatase.